The sequence spans 331 residues: Ketol-acid reductoisomerase (NADP(+)) (331 aa).

One can recognise a KARI N-terminal Rossmann domain in the interval 2-182 (VEIYYDDDAN…GGTRAGALRT (181 aa)). Residues 25–28 (FGSQ), Ser-51, and Ser-53 each bind NADP(+). His-108 is a catalytic residue. Gly-134 contacts NADP(+). A KARI C-terminal knotted domain is found at 183–328 (TFTEETETDL…GKLRPMMSWI (146 aa)). 4 residues coordinate Mg(2+): Asp-191, Glu-195, Glu-227, and Glu-231. Ser-252 contacts substrate.

This sequence belongs to the ketol-acid reductoisomerase family. Mg(2+) serves as cofactor.

It catalyses the reaction (2R)-2,3-dihydroxy-3-methylbutanoate + NADP(+) = (2S)-2-acetolactate + NADPH + H(+). It carries out the reaction (2R,3R)-2,3-dihydroxy-3-methylpentanoate + NADP(+) = (S)-2-ethyl-2-hydroxy-3-oxobutanoate + NADPH + H(+). It participates in amino-acid biosynthesis; L-isoleucine biosynthesis; L-isoleucine from 2-oxobutanoate: step 2/4. It functions in the pathway amino-acid biosynthesis; L-valine biosynthesis; L-valine from pyruvate: step 2/4. Involved in the biosynthesis of branched-chain amino acids (BCAA). Catalyzes an alkyl-migration followed by a ketol-acid reduction of (S)-2-acetolactate (S2AL) to yield (R)-2,3-dihydroxy-isovalerate. In the isomerase reaction, S2AL is rearranged via a Mg-dependent methyl migration to produce 3-hydroxy-3-methyl-2-ketobutyrate (HMKB). In the reductase reaction, this 2-ketoacid undergoes a metal-dependent reduction by NADPH to yield (R)-2,3-dihydroxy-isovalerate. This Parafrankia sp. (strain EAN1pec) protein is Ketol-acid reductoisomerase (NADP(+)).